The chain runs to 1409 residues: MAP kinase-activating death domain protein (1409 aa).

The uDENN domain maps to 26–230; it reads RGASQSSPDA…VPVPGKTKVQ (205 aa). The cDENN domain maps to 251-390; sequence RFTLIDFPLH…DATHLKERLK (140 aa). The 105-residue stretch at 392–496 folds into the dDENN domain; the sequence is AINKMTTMTV…ECCLCPKNET (105 aa). 4 disordered regions span residues 654 to 701, 761 to 784, 902 to 1008, and 1015 to 1034; these read SFDH…MKGL, QHIV…QSKN, SSSA…KVKT, and PQNL…SFLA. Polar residues-rich tracts occupy residues 680-691 and 761-772; these read SDASDTPTSRGS and QHIVRSKTQPNP. Low complexity-rich tracts occupy residues 773–784 and 902–913; these read TSQQTANQQSKN and SSSAPSTMTTPS. Residues 915–925 are compositionally biased toward basic and acidic residues; that stretch reads HSNDILKESRP. Residues 941-961 show a composition bias toward polar residues; sequence LGQNVTPTSTNNHEIAQSTRS. The segment covering 963-1003 has biased composition (pro residues); that stretch reads ALPPPVPPREAPPIPKRNPPPLGAPPKVPEGARAPPPLPPR. The segment covering 1020–1031 has biased composition (low complexity); sequence PNNQPAQPSSPS. One can recognise a Death domain in the interval 1109 to 1184; the sequence is GMDQEPSEMI…GLVCSKEINK (76 aa).

Belongs to the MADD family. As to quaternary structure, interacts with cab-1. As to expression, expressed in nearly all neurons.

The protein localises to the cell membrane. The protein resides in the cytoplasm. Guanyl-nucleotide exchange factor that regulates small GTPases. Converts GDP-bound inactive form of rab-3 and cab-1 to the GTP-bound active forms. Regulator of presynaptic activity that interacts with rab-3 to regulate synaptic vesicle release. Is also a regulator of the cab-1 synaptic transmission pathway. Probably by converting rab-3 to its GTP-bound active form, plays a role in the recruitment of endophilin unc-57 to synaptic vesicles. Probably by activating rab-3 and thus regulating the trafficking of dense-core vesicles, plays a role in AVG neuron-mediated formation of the right axon tract of the ventral nerve cord. Regulates anterior body muscle contractions (aBOC) and the expulsion steps during the defecation motor program (DMP). Probably by regulating DMP, required for fatty acid uptake by intestinal cells. The chain is MAP kinase-activating death domain protein (aex-3) from Caenorhabditis elegans.